We begin with the raw amino-acid sequence, 848 residues long: Neuroligin-3 (848 aa).

The N-terminal stretch at 1–37 (MWLRLGPPSLSLSPKPTVGRSLCLTLWFLSLALRAST) is a signal peptide. Over 38–709 (QAPAPTVNTH…NPRDYSTELS (672 aa)) the chain is Extracellular. Asparagine 98 is a glycosylation site (N-linked (GlcNAc...) asparagine). A disulfide bridge links cysteine 106 with cysteine 141. Residues 170-195 (RKGGSGAKKQGEDLADNDGDEDEDIR) form a disordered region. The span at 182-194 (DLADNDGDEDEDI) shows a compositional bias: acidic residues. Intrachain disulfides connect cysteine 340-cysteine 351 and cysteine 510-cysteine 544. Asparagine 545 is a glycosylation site (N-linked (GlcNAc...) asparagine). 2 stretches are compositionally biased toward polar residues: residues 645–656 (TKVPPPDTTHSS) and 677–689 (AYSN…SWNG). The segment at 645 to 694 (TKVPPPDTTHSSHITRRPNGKTWSTKRPAISPAYSNENAQGSWNGDQDAG) is disordered. A helical transmembrane segment spans residues 710–730 (VTIAVGASLLFLNVLAFAALY). Topologically, residues 731-848 (YRKDKRRQEP…LPHSHSTTRV (118 aa)) are cytoplasmic. Serine 745 is subject to Phosphoserine. At tyrosine 792 the chain carries Phosphotyrosine.

This sequence belongs to the type-B carboxylesterase/lipase family. In terms of assembly, homodimer, and heterodimer with NLGN1 and NLGN2. Interacts with neurexins NRXN1, NRXN2 and NRXN3. Interaction with neurexins is mediated by heparan sulfate glycan modification on neurexin. Interacts (via its C-terminus) with DLG4/PSD-95 (via PDZ domain 3). In terms of tissue distribution, expressed in the blood vessel walls (at protein level). Detected in throughout the brain and in spinal cord. Detected in brain, and at lower levels in pancreas islet beta cells.

The protein localises to the cell membrane. Its subcellular location is the synapse. Cell surface protein involved in cell-cell-interactions via its interactions with neurexin family members. Plays a role in synapse function and synaptic signal transmission, and may mediate its effects by clustering other synaptic proteins. May promote the initial formation of synapses, but is not essential for this. May also play a role in glia-glia or glia-neuron interactions in the developing peripheral nervous system. The chain is Neuroligin-3 (NLGN3) from Homo sapiens (Human).